We begin with the raw amino-acid sequence, 256 residues long: Protein FixA (256 aa).

This sequence belongs to the ETF beta-subunit/FixA family. Heterodimer of FixA and FixB.

It participates in amine and polyamine metabolism; carnitine metabolism. In terms of biological role, required for anaerobic carnitine reduction. May bring reductant to CaiA. The chain is Protein FixA from Escherichia coli O17:K52:H18 (strain UMN026 / ExPEC).